Here is a 650-residue protein sequence, read N- to C-terminus: Macrolide export ATP-binding/permease protein MacB (650 aa).

An ABC transporter domain is found at 9 to 248; that stretch reads IELIDLERVF…RPLGRPPGGA (240 aa). 45–52 lines the ATP pocket; the sequence is GQSGSGKS. The next 4 membrane-spanning stretches (helical) occupy residues 276 to 296, 525 to 545, 580 to 600, and 615 to 635; these read ALTL…MAIG, LTLL…IGVM, AVAV…GAAL, and PPIV…YLPA.

It belongs to the ABC transporter superfamily. Macrolide exporter (TC 3.A.1.122) family. In terms of assembly, homodimer.

It localises to the cell inner membrane. Non-canonical ABC transporter that contains transmembrane domains (TMD), which form a pore in the inner membrane, and an ATP-binding domain (NBD), which is responsible for energy generation. Confers resistance against macrolides. This Rhodospirillum rubrum (strain ATCC 11170 / ATH 1.1.1 / DSM 467 / LMG 4362 / NCIMB 8255 / S1) protein is Macrolide export ATP-binding/permease protein MacB.